Consider the following 177-residue polypeptide: MSRVAKAPIEIPAGVEVTLNGQEVTIKGAQGSLSRVVNDAVELVKDESELRTNAREGVANSTAQAGTARALLQNMVVGVTKGFERKLQLIGVGYRAQAQGKKLNLTLGFSHPVEFEIPEGITIDTPTQTEVVVKGADKQLVGQVAANIRAYRKPEPYKGKGVRYADEQVRRKEAKKK.

The protein belongs to the universal ribosomal protein uL6 family. Part of the 50S ribosomal subunit.

Its function is as follows. This protein binds to the 23S rRNA, and is important in its secondary structure. It is located near the subunit interface in the base of the L7/L12 stalk, and near the tRNA binding site of the peptidyltransferase center. The polypeptide is Large ribosomal subunit protein uL6 (Idiomarina loihiensis (strain ATCC BAA-735 / DSM 15497 / L2-TR)).